A 572-amino-acid polypeptide reads, in one-letter code: Acyl-coenzyme A synthetase ACSM2, mitochondrial (572 aa).

The transit peptide at 1–46 (MHWLWKIPRLCTFWGTEMFHRTFHMNIKKLMPIQWGHQEVPAKFNF) directs the protein to the mitochondrion. Glutamine 139 is a binding site for CoA. Residues 221 to 229 (TSGTSGPPK), 359 to 364 (EIYGQT), aspartate 446, and arginine 461 contribute to the ATP site. A substrate-binding site is contributed by threonine 364. 469-471 (SGY) lines the CoA pocket. Substrate is bound at residue arginine 472. CoA is bound by residues arginine 501, lysine 532, and 540–542 (YPR). Lysine 557 lines the ATP pocket.

This sequence belongs to the ATP-dependent AMP-binding enzyme family. As to quaternary structure, monomer. Mg(2+) is required as a cofactor. Requires Mn(2+) as cofactor. In terms of tissue distribution, detected in kidney, in proximal tubules.

Its subcellular location is the mitochondrion. The catalysed reaction is a medium-chain fatty acid + ATP + CoA = a medium-chain fatty acyl-CoA + AMP + diphosphate. It carries out the reaction benzoate + ATP + CoA = benzoyl-CoA + AMP + diphosphate. The enzyme catalyses hexanoate + ATP + CoA = hexanoyl-CoA + AMP + diphosphate. It catalyses the reaction butanoate + ATP + CoA = butanoyl-CoA + AMP + diphosphate. The catalysed reaction is octanoate + ATP + CoA = octanoyl-CoA + AMP + diphosphate. It carries out the reaction decanoate + ATP + CoA = decanoyl-CoA + AMP + diphosphate. Its function is as follows. Catalyzes the activation of fatty acids by CoA to produce an acyl-CoA, the first step in fatty acid metabolism. Capable of activating medium-chain fatty acids (e.g. butyric (C4) to decanoic (C10) acids), and certain carboxylate-containing xenobiotics, e.g. benzoate. The polypeptide is Acyl-coenzyme A synthetase ACSM2, mitochondrial (Acsm2) (Rattus norvegicus (Rat)).